The primary structure comprises 402 residues: MPKKTVANLTEADLAGKRVLVRVDFNVPMDKATGAISDDTRIRAALPTIEDLIKKGAKVILCSHMGRPDGQVKENLRLTPVAKRLSELLGQEVIMCPDCIGEGVTAAISQMSNGQVALLENLRFHGEEEANDPDFAKKLAANADLYVNDAFGTAHRAHASTEGVTHYLSPSVAGYLIEKELNYLQAAIETPQRPLAAIIGGSKVSSKIGVIETLLEKCDKLLIGGGMIFTFYKARGLSVGKSLVEEDKLELAKSLEAKAKEKGVEFLLPTDVVLADKFDKDAESQIVKVENIPDGWMGLDIGPESVKVFQEALSNCKSVLWNGPMGVFEFDKFAAGTDAIAHTLADLTATGTTTIIGGGDSVAAVEKVGVAEKMSHISTGGGASLELLEGKVLPGIAALDEA.

Substrate contacts are provided by residues 24–26 (DFN), Arg41, 64–67 (HMGR), Arg123, and Arg156. ATP contacts are provided by residues Lys207, Gly298, Glu329, and 358 to 361 (GGDS).

Belongs to the phosphoglycerate kinase family. Monomer.

It localises to the cytoplasm. It carries out the reaction (2R)-3-phosphoglycerate + ATP = (2R)-3-phospho-glyceroyl phosphate + ADP. The protein operates within carbohydrate degradation; glycolysis; pyruvate from D-glyceraldehyde 3-phosphate: step 2/5. The chain is Phosphoglycerate kinase from Microcystis aeruginosa (strain NIES-843 / IAM M-2473).